The primary structure comprises 229 residues: Ribonuclease 3 (229 aa).

The region spanning 7–132 is the RNase III domain; that stretch reads ISAFCDRIGH…VIAAVYRDAG (126 aa). E45 is a binding site for Mg(2+). The active site involves D49. The Mg(2+) site is built by D118 and E121. E121 is an active-site residue. Residues 157–226 form the DRBM domain; that stretch reads DPKTALQEWA…AKALLAQVES (70 aa).

It belongs to the ribonuclease III family. In terms of assembly, homodimer. Mg(2+) is required as a cofactor.

It is found in the cytoplasm. It catalyses the reaction Endonucleolytic cleavage to 5'-phosphomonoester.. Digests double-stranded RNA. Involved in the processing of primary rRNA transcript to yield the immediate precursors to the large and small rRNAs (23S and 16S). Processes some mRNAs, and tRNAs when they are encoded in the rRNA operon. Processes pre-crRNA and tracrRNA of type II CRISPR loci if present in the organism. The protein is Ribonuclease 3 of Dinoroseobacter shibae (strain DSM 16493 / NCIMB 14021 / DFL 12).